Consider the following 546-residue polypeptide: Chaperonin GroEL (546 aa).

Residues Thr-30–Pro-33, Lys-51, Asp-87–Thr-91, Gly-415, Asn-479–Ala-481, and Asp-495 each bind ATP. The disordered stretch occupies residues Lys-526–Met-546. Gly residues predominate over residues Gly-534–Met-546.

Belongs to the chaperonin (HSP60) family. Forms a cylinder of 14 subunits composed of two heptameric rings stacked back-to-back. Interacts with the co-chaperonin GroES.

It localises to the cytoplasm. It catalyses the reaction ATP + H2O + a folded polypeptide = ADP + phosphate + an unfolded polypeptide.. Together with its co-chaperonin GroES, plays an essential role in assisting protein folding. The GroEL-GroES system forms a nano-cage that allows encapsulation of the non-native substrate proteins and provides a physical environment optimized to promote and accelerate protein folding. In Burkholderia cepacia (Pseudomonas cepacia), this protein is Chaperonin GroEL.